A 185-amino-acid chain; its full sequence is Ribosome-recycling factor (185 aa).

Belongs to the RRF family.

It is found in the cytoplasm. In terms of biological role, responsible for the release of ribosomes from messenger RNA at the termination of protein biosynthesis. May increase the efficiency of translation by recycling ribosomes from one round of translation to another. This Pectobacterium carotovorum subsp. carotovorum (strain PC1) protein is Ribosome-recycling factor.